The primary structure comprises 309 residues: Testis-expressed protein 264 homolog (309 aa).

Over 1–3 the chain is Lumenal; the sequence is MPD. A helical; Signal-anchor for type III membrane protein membrane pass occupies residues 4 to 24; sequence LLLLGLIGALTLLLLLTLLAF. Residues 25–309 are Cytoplasmic-facing; that stretch reads AGYSGLLTGV…ELSTPERGEE (285 aa). Residues 193–309 form a disordered region; that stretch reads PEVKETERKC…ELSTPERGEE (117 aa). Low complexity predominate over residues 208 to 225; it reads ATDTQTDGTGADTSDASS. Phosphoserine is present on residues S238 and S243. Positions 250-262 are enriched in basic and acidic residues; sequence GWDDGDNRSEHSY. Low complexity predominate over residues 263–272; the sequence is SESGASGSSF. The LIR motif motif lies at 272–275; it reads FEEL.

Interacts (via the LIR motif) with ATG8 family proteins MAP1LC3A, MAP1LC3B, GABARAP and GABARAPL1. Interacts with VCP/p97; bridging VCP/p97 to covalent DNA-protein cross-links (DPCs). Interacts with TOP1 (when sumoylated).

Its subcellular location is the endoplasmic reticulum membrane. It localises to the cytoplasmic vesicle. The protein localises to the autophagosome. It is found in the cytoplasm. The protein resides in the cytosol. Its subcellular location is the nucleus. It localises to the chromosome. Functionally, major reticulophagy (also called ER-phagy) receptor that acts independently of other candidate reticulophagy receptors to remodel subdomains of the endoplasmic reticulum into autophagosomes upon nutrient stress, which then fuse with lysosomes for endoplasmic reticulum turnover. The ATG8-containing isolation membrane (IM) cradles a tubular segment of TEX264-positive ER near a three-way junction, allowing the formation of a synapse of 2 juxtaposed membranes with trans interaction between the TEX264 and ATG8 proteins. Expansion of the IM would extend the capture of ER, possibly through a 'zipper-like' process involving continued trans TEX264-ATG8 interactions, until poorly understood mechanisms lead to the fission of relevant membranes and, ultimately, autophagosomal membrane closure. Also involved in the repair of covalent DNA-protein cross-links (DPCs) during DNA synthesis: acts by bridging VCP/p97 to covalent DNA-protein cross-links (DPCs) and initiating resolution of DPCs by SPRTN. The sequence is that of Testis-expressed protein 264 homolog from Mus musculus (Mouse).